Consider the following 375-residue polypeptide: 23S rRNA (uracil(747)-C(5))-methyltransferase RlmC (375 aa).

4 residues coordinate [4Fe-4S] cluster: C3, C11, C14, and C87. Q212, F241, E262, and N307 together coordinate S-adenosyl-L-methionine. The Nucleophile role is filled by C334.

It belongs to the class I-like SAM-binding methyltransferase superfamily. RNA M5U methyltransferase family. RlmC subfamily.

It carries out the reaction uridine(747) in 23S rRNA + S-adenosyl-L-methionine = 5-methyluridine(747) in 23S rRNA + S-adenosyl-L-homocysteine + H(+). Catalyzes the formation of 5-methyl-uridine at position 747 (m5U747) in 23S rRNA. This Salmonella enteritidis PT4 (strain P125109) protein is 23S rRNA (uracil(747)-C(5))-methyltransferase RlmC.